A 459-amino-acid polypeptide reads, in one-letter code: Carbonic anhydrase 9 (459 aa).

The first 37 residues, 1-37, serve as a signal peptide directing secretion; the sequence is MAPLCPSPWLPLLIPAPAPGLTVQLLLSLLLLVPVHP. The segment at 38–112 is proteoglycan-like (PG); sequence QRLPRMQEDS…EEEGSLKLED (75 aa). The Extracellular portion of the chain corresponds to 38 to 414; that stretch reads QRLPRMQEDS…QLNSCLAAGD (377 aa). The segment at 42 to 154 is disordered; that stretch reads RMQEDSPLGG…GDPPWPRVSP (113 aa). Positions 55-95 are enriched in acidic residues; it reads GEDDPLGEEDLPSEEDSPREEDPPGEEDLPGEEDLPGEEDL. Residues 96 to 112 are compositionally biased toward basic and acidic residues; sequence PEVKPKSEEEGSLKLED. Residue Thr115 is glycosylated (O-linked (GlcNAc...) threonine). A compositionally biased stretch (basic and acidic residues) spans 129-140; that stretch reads AHRDKEGDDQSH. Residues 138–391 form a catalytic region; the sequence is QSHWRYGGDP…NGRVIEASFP (254 aa). Residues 139-390 enclose the Alpha-carbonic anhydrase domain; that stretch reads SHWRYGGDPP…LNGRVIEASF (252 aa). Cys156 and Cys336 are joined by a disulfide. The Proton donor/acceptor role is filled by His200. Zn(2+) is bound by residues His226, His228, and His251. Position 332–333 (332–333) interacts with substrate; the sequence is TT. Residue Asn346 is glycosylated (N-linked (GlcNAc...) asparagine). Residues 415–435 traverse the membrane as a helical segment; sequence ILALVFGLLFAVTSVAFLVQM. At 436-459 the chain is on the cytoplasmic side; the sequence is RRQHRRGTKGGVSYRPAEVAETGA. Position 449 is a phosphotyrosine (Tyr449).

This sequence belongs to the alpha-carbonic anhydrase family. Forms oligomers linked by disulfide bonds. Zn(2+) serves as cofactor. Post-translationally, asn-346 bears high-mannose type glycan structures. As to expression, expressed primarily in carcinoma cells lines. Expression is restricted to very few normal tissues and the most abundant expression is found in the epithelial cells of gastric mucosa.

It localises to the nucleus. The protein resides in the nucleolus. The protein localises to the cell membrane. It is found in the cell projection. Its subcellular location is the microvillus membrane. It catalyses the reaction hydrogencarbonate + H(+) = CO2 + H2O. Inhibited by coumarins, saccharin, sulfonamide derivatives such as acetazolamide (AZA) and Foscarnet (phosphonoformate trisodium salt). Catalyzes the interconversion between carbon dioxide and water and the dissociated ions of carbonic acid (i.e. bicarbonate and hydrogen ions). This chain is Carbonic anhydrase 9 (CA9), found in Homo sapiens (Human).